The sequence spans 399 residues: Phosphoglycerate kinase (399 aa).

Substrate-binding positions include 21-23 (DFN), Arg36, 59-62 (HLGR), Arg120, and Arg158. ATP-binding positions include Lys209, Gly297, Glu328, and 355–358 (GGDS).

Belongs to the phosphoglycerate kinase family. Monomer.

Its subcellular location is the cytoplasm. The enzyme catalyses (2R)-3-phosphoglycerate + ATP = (2R)-3-phospho-glyceroyl phosphate + ADP. It participates in carbohydrate degradation; glycolysis; pyruvate from D-glyceraldehyde 3-phosphate: step 2/5. In Streptococcus thermophilus (strain ATCC BAA-250 / LMG 18311), this protein is Phosphoglycerate kinase.